The chain runs to 646 residues: A-kinase anchor protein 8-like (646 aa).

The tract at residues Met1–Thr268 is sufficient for activation of CTE-mediated expression. The residue at position 208 (Arg208) is an Asymmetric dimethylarginine; alternate. Arg208 is subject to Omega-N-methylarginine; alternate. Residues Arg217, Arg237, and Arg247 each carry the omega-N-methylarginine modification. Lys257 is modified (N6-acetyllysine). Positions Lys264–Asp381 are disordered. Position 267 is a phosphothreonine (Thr267). The Nuclear localization signal motif lies at Lys274–Lys279. Residues Gln280–Cys296 carry the Nuclear export signal (NES) motif. Ser283 bears the Phosphoserine mark. A compositionally biased stretch (basic and acidic residues) spans Pro287–Cys296. Thr292 is modified (phosphothreonine). Ser297 is modified (phosphoserine). The span at Asp298–Glu314 shows a compositional bias: acidic residues. Residues Glu337–Lys349 show a composition bias toward basic and acidic residues. The short motif at Lys362–Lys364 is the Nuclear localization signal element. 2 C2H2 AKAP95-type zinc fingers span residues Cys391–His413 and Cys484–His507. Positions Gly545–Pro646 are disordered. At Ser552 the chain carries Phosphoserine. The span at Ser552–Glu563 shows a compositional bias: acidic residues. Over residues Gly564–Pro586 the composition is skewed to low complexity. The segment covering Ala587 to Pro607 has biased composition (pro residues). Positions Asp634–Pro646 are enriched in acidic residues.

Belongs to the AKAP95 family. As to quaternary structure, interacts (via N-terminus) with DHX9 (via RGG region). Interacts with TMPO isoform Beta, PRPF40A, RNF43, lamin-B. Interacts with HDAC3; increased during mitosis. Interacts with EBV EBNA-LP. Interacts with HIV-1 reverse transcriptase/ribonuclease H. Post-translationally, phosphorylated on serine or threonine residues possibly by PKA; probably modulating the interaction with TMPO isoform Beta. Ubiquitously expressed. Expressed in the brain cortex (at protein level).

The protein localises to the nucleus. Its subcellular location is the nucleus matrix. It is found in the nucleus speckle. It localises to the PML body. The protein resides in the cytoplasm. Functionally, could play a role in constitutive transport element (CTE)-mediated gene expression by association with DHX9. Increases CTE-dependent nuclear unspliced mRNA export. Proposed to target PRKACA to the nucleus but does not seem to be implicated in the binding of regulatory subunit II of PKA. May be involved in nuclear envelope breakdown and chromatin condensation. May be involved in anchoring nuclear membranes to chromatin in interphase and in releasing membranes from chromating at mitosis. May regulate the initiation phase of DNA replication when associated with TMPO isoform Beta. Required for cell cycle G2/M transition and histone deacetylation during mitosis. In mitotic cells recruits HDAC3 to the vicinity of chromatin leading to deacetylation and subsequent phosphorylation at 'Ser-10' of histone H3; in this function seems to act redundantly with AKAP8. May be involved in regulation of pre-mRNA splicing. In terms of biological role, (Microbial infection) In case of EBV infection, may target PRKACA to EBNA-LP-containing nuclear sites to modulate transcription from specific promoters. (Microbial infection) Can synergize with DHX9 to activate the CTE-mediated gene expression of type D retroviruses. Its function is as follows. (Microbial infection) In case of HIV-1 infection, involved in the DHX9-promoted annealing of host tRNA(Lys3) to viral genomic RNA as a primer in reverse transcription; in vitro negatively regulates DHX9 annealing activity. The polypeptide is A-kinase anchor protein 8-like (AKAP8L) (Homo sapiens (Human)).